Consider the following 100-residue polypeptide: MYB-like transcription factor TCL2 (100 aa).

Positions 37 to 74 (TEQEEDLIFRMHRLVGDRWDLIAGRVVGREAKDIERYW) constitute a Myb-like domain.

As to quaternary structure, interacts with GL3. As to expression, expressed in cotyledons, petioles, rosette leaves, hydathodes, cauline leaves, stems, pedicels and flower buds.

It is found in the nucleus. MYB-type transcription factor involved in trichome cell specification. Acts as a negative regulator of trichome patterning and formation. May function by suppressing the expression of GL3. This Arabidopsis thaliana (Mouse-ear cress) protein is MYB-like transcription factor TCL2 (TCL2).